The following is a 254-amino-acid chain: Segregation and condensation protein A (254 aa).

Belongs to the ScpA family. In terms of assembly, component of a cohesin-like complex composed of ScpA, ScpB and the Smc homodimer, in which ScpA and ScpB bind to the head domain of Smc. The presence of the three proteins is required for the association of the complex with DNA.

It localises to the cytoplasm. Participates in chromosomal partition during cell division. May act via the formation of a condensin-like complex containing Smc and ScpB that pull DNA away from mid-cell into both cell halves. This is Segregation and condensation protein A from Brevibacillus brevis (strain 47 / JCM 6285 / NBRC 100599).